Reading from the N-terminus, the 415-residue chain is Serine--tRNA ligase (415 aa).

Residue 231-233 (TAE) coordinates L-serine. 262–264 (RSE) lines the ATP pocket. Glu285 is an L-serine binding site. 349–352 (EISS) contributes to the ATP binding site. Residue Ser383 participates in L-serine binding.

It belongs to the class-II aminoacyl-tRNA synthetase family. Type-1 seryl-tRNA synthetase subfamily. In terms of assembly, homodimer. The tRNA molecule binds across the dimer.

It localises to the cytoplasm. It carries out the reaction tRNA(Ser) + L-serine + ATP = L-seryl-tRNA(Ser) + AMP + diphosphate + H(+). It catalyses the reaction tRNA(Sec) + L-serine + ATP = L-seryl-tRNA(Sec) + AMP + diphosphate + H(+). Its pathway is aminoacyl-tRNA biosynthesis; selenocysteinyl-tRNA(Sec) biosynthesis; L-seryl-tRNA(Sec) from L-serine and tRNA(Sec): step 1/1. Catalyzes the attachment of serine to tRNA(Ser). Is also able to aminoacylate tRNA(Sec) with serine, to form the misacylated tRNA L-seryl-tRNA(Sec), which will be further converted into selenocysteinyl-tRNA(Sec). This is Serine--tRNA ligase from Helicobacter pylori (strain Shi470).